The following is a 349-amino-acid chain: tRNA pseudouridine synthase D (349 aa).

F27 contacts substrate. The Nucleophile role is filled by D80. Residue N129 coordinates substrate. The TRUD domain occupies 155 to 303; that stretch reads GVPNYFGAQR…VEAARRAMLL (149 aa). F329 is a binding site for substrate.

The protein belongs to the pseudouridine synthase TruD family.

The enzyme catalyses uridine(13) in tRNA = pseudouridine(13) in tRNA. Its function is as follows. Responsible for synthesis of pseudouridine from uracil-13 in transfer RNAs. The chain is tRNA pseudouridine synthase D from Escherichia coli O45:K1 (strain S88 / ExPEC).